The primary structure comprises 885 residues: Leucine--tRNA ligase (885 aa).

Positions 53–63 match the 'HIGH' region motif; that stretch reads PYPSGKLHMGH. Residues 631–635 carry the 'KMSKS' region motif; it reads KMSKS. Residue K634 coordinates ATP.

It belongs to the class-I aminoacyl-tRNA synthetase family.

It localises to the cytoplasm. It carries out the reaction tRNA(Leu) + L-leucine + ATP = L-leucyl-tRNA(Leu) + AMP + diphosphate. The sequence is that of Leucine--tRNA ligase from Psychrobacter sp. (strain PRwf-1).